Reading from the N-terminus, the 314-residue chain is Acetyl-coenzyme A carboxylase carboxyl transferase subunit beta (314 aa).

In terms of domain architecture, CoA carboxyltransferase N-terminal spans 44–311 (LMNKCPHCGT…VETWQASSPL (268 aa)). 4 residues coordinate Zn(2+): cysteine 48, cysteine 51, cysteine 67, and cysteine 70. Residues 48–70 (CPHCGTIHYSKDLEKNLRVCKGC) form a C4-type zinc finger.

It belongs to the AccD/PCCB family. Acetyl-CoA carboxylase is a heterohexamer composed of biotin carboxyl carrier protein (AccB), biotin carboxylase (AccC) and two subunits each of ACCase subunit alpha (AccA) and ACCase subunit beta (AccD). Zn(2+) is required as a cofactor.

It is found in the cytoplasm. It catalyses the reaction N(6)-carboxybiotinyl-L-lysyl-[protein] + acetyl-CoA = N(6)-biotinyl-L-lysyl-[protein] + malonyl-CoA. Its pathway is lipid metabolism; malonyl-CoA biosynthesis; malonyl-CoA from acetyl-CoA: step 1/1. Functionally, component of the acetyl coenzyme A carboxylase (ACC) complex. Biotin carboxylase (BC) catalyzes the carboxylation of biotin on its carrier protein (BCCP) and then the CO(2) group is transferred by the transcarboxylase to acetyl-CoA to form malonyl-CoA. The sequence is that of Acetyl-coenzyme A carboxylase carboxyl transferase subunit beta from Brevibacillus brevis (strain 47 / JCM 6285 / NBRC 100599).